Here is a 98-residue protein sequence, read N- to C-terminus: Small ribosomal subunit protein eS24 (98 aa).

The segment at glycine 76–alanine 98 is disordered. The span at glycine 89–alanine 98 shows a compositional bias: basic and acidic residues.

This sequence belongs to the eukaryotic ribosomal protein eS24 family.

This Methanosphaerula palustris (strain ATCC BAA-1556 / DSM 19958 / E1-9c) protein is Small ribosomal subunit protein eS24.